The sequence spans 137 residues: MIKNIGVDQIEVDRIAKVVDRGDGFARKVLTDREFAQYQDLTHKRKIEYLGGRFAIKEAFSKAWGTGIGQAVSFEDVETLRTESGAPVTTSRIFTGRIFSSIAHDDHEIVAVVVLEEPAGWRRAIGKLSHLLSGRKK.

Residues Asp-8 and Glu-58 each coordinate Mg(2+).

The protein belongs to the P-Pant transferase superfamily. AcpS family. Requires Mg(2+) as cofactor.

Its subcellular location is the cytoplasm. The catalysed reaction is apo-[ACP] + CoA = holo-[ACP] + adenosine 3',5'-bisphosphate + H(+). Transfers the 4'-phosphopantetheine moiety from coenzyme A to a Ser of acyl-carrier-protein. The polypeptide is Holo-[acyl-carrier-protein] synthase (Lactobacillus delbrueckii subsp. bulgaricus (strain ATCC BAA-365 / Lb-18)).